A 601-amino-acid chain; its full sequence is Glutathione-regulated potassium-efflux system protein KefB (601 aa).

The next 13 helical transmembrane spans lie at S4–A24, I29–F49, E55–L75, I87–M107, A115–M135, V152–G172, H177–G197, F207–G227, L230–L250, G268–Y288, L291–L311, M324–A344, and A356–V376. The region spanning K400 to T519 is the RCK N-terminal domain.

It belongs to the monovalent cation:proton antiporter 2 (CPA2) transporter (TC 2.A.37) family. KefB subfamily. As to quaternary structure, interacts with the regulatory subunit KefG.

The protein localises to the cell inner membrane. In terms of biological role, pore-forming subunit of a potassium efflux system that confers protection against electrophiles. Catalyzes K(+)/H(+) antiport. The protein is Glutathione-regulated potassium-efflux system protein KefB of Escherichia coli O139:H28 (strain E24377A / ETEC).